The sequence spans 390 residues: GTPase Obg (390 aa).

The Obg domain maps to 1–159 (MKFVDEASIL…RDLLLELMLL (159 aa)). The disordered stretch occupies residues 127-147 (NTRFKSSVNRTPRQKTNGTPG). A compositionally biased stretch (polar residues) spans 129 to 145 (RFKSSVNRTPRQKTNGT). The OBG-type G domain occupies 160–333 (ADVGMLGMPN…LCWDVMTFII (174 aa)). GTP is bound by residues 166 to 173 (GMPNAGKS), 191 to 195 (FTTLV), 213 to 216 (DIPG), 283 to 286 (NKID), and 314 to 316 (SAA). Mg(2+) contacts are provided by S173 and T193.

This sequence belongs to the TRAFAC class OBG-HflX-like GTPase superfamily. OBG GTPase family. Monomer. Mg(2+) serves as cofactor.

It is found in the cytoplasm. Functionally, an essential GTPase which binds GTP, GDP and possibly (p)ppGpp with moderate affinity, with high nucleotide exchange rates and a fairly low GTP hydrolysis rate. Plays a role in control of the cell cycle, stress response, ribosome biogenesis and in those bacteria that undergo differentiation, in morphogenesis control. The polypeptide is GTPase Obg (Salmonella paratyphi A (strain ATCC 9150 / SARB42)).